The primary structure comprises 215 residues: Thiamine-phosphate synthase 1 (215 aa).

4-amino-2-methyl-5-(diphosphooxymethyl)pyrimidine contacts are provided by residues 35-39 (QYRFE) and Asn67. Mg(2+) is bound by residues Asp68 and Asp87. Position 106 (Thr106) interacts with 4-amino-2-methyl-5-(diphosphooxymethyl)pyrimidine. A 2-[(2R,5Z)-2-carboxy-4-methylthiazol-5(2H)-ylidene]ethyl phosphate-binding site is contributed by 132–134 (TST). Residue Lys135 coordinates 4-amino-2-methyl-5-(diphosphooxymethyl)pyrimidine. Position 162 (Gly162) interacts with 2-[(2R,5Z)-2-carboxy-4-methylthiazol-5(2H)-ylidene]ethyl phosphate.

Belongs to the thiamine-phosphate synthase family. Mg(2+) serves as cofactor.

The enzyme catalyses 2-[(2R,5Z)-2-carboxy-4-methylthiazol-5(2H)-ylidene]ethyl phosphate + 4-amino-2-methyl-5-(diphosphooxymethyl)pyrimidine + 2 H(+) = thiamine phosphate + CO2 + diphosphate. It carries out the reaction 2-(2-carboxy-4-methylthiazol-5-yl)ethyl phosphate + 4-amino-2-methyl-5-(diphosphooxymethyl)pyrimidine + 2 H(+) = thiamine phosphate + CO2 + diphosphate. It catalyses the reaction 4-methyl-5-(2-phosphooxyethyl)-thiazole + 4-amino-2-methyl-5-(diphosphooxymethyl)pyrimidine + H(+) = thiamine phosphate + diphosphate. It participates in cofactor biosynthesis; thiamine diphosphate biosynthesis; thiamine phosphate from 4-amino-2-methyl-5-diphosphomethylpyrimidine and 4-methyl-5-(2-phosphoethyl)-thiazole: step 1/1. Functionally, condenses 4-methyl-5-(beta-hydroxyethyl)thiazole monophosphate (THZ-P) and 2-methyl-4-amino-5-hydroxymethyl pyrimidine pyrophosphate (HMP-PP) to form thiamine monophosphate (TMP). This chain is Thiamine-phosphate synthase 1, found in Aquifex aeolicus (strain VF5).